We begin with the raw amino-acid sequence, 239 residues long: Tetratricopeptide repeat protein 9B (239 aa).

The tract at residues 1–54 (MQRGALSPVLMLSAAPEPPPRPPPALSPPGPGSAPRHGSARSGPAPEPSGGLAA) is disordered. S7 and S27 each carry phosphoserine. The segment covering 16-32 (PEPPPRPPPALSPPGPG) has biased composition (pro residues). Residues 63–97 (AVAFKAEGQRCYREKKFREAIGKYHRALLQLKAAQ) form a TPR 1 repeat. A disordered region spans residues 98–121 (GARPGGLPTPSPGPTTSPGPARLS). Residues 104–114 (LPTPSPGPTTS) are compositionally biased toward pro residues. A TPR 2 repeat occupies 169 to 202 (FKATYRAGIAFYHLGDYARALRYLQEARSREPTD).

The protein belongs to the TTC9 family.

The sequence is that of Tetratricopeptide repeat protein 9B (Ttc9b) from Mus musculus (Mouse).